The sequence spans 339 residues: MSLPPVFGKELNMSQQLIDNFDRKFEYLRLSITDVCNFKCNYCLPDGYQRTHEKQFLSKQEITNLVNAFAELGAKKVRITGGEPALRKDFPKIIEAIATIPGIQKVATTTNGYNLSSHAQAWFDAGLDSINVSVDSLDAKTFHLITGKNIFQKVMQGVNASVKAGFKQVKINSVLMKGLNDIDIDLYINWIKDQPIQLRFIELMQTEDNGEFFNKHHLSGEWIKQNLLENGWTQKQSLSHDGPAQIFYHPDYLGEIGLIMPYSKDFCKSCNRLRVSSVGRLHLCLFGEEGVDLRDLLGTSADKEKLKQRIVESLKSKKVSHYLADGESGGTPHLASIGG.

Positions 20–241 (NFDRKFEYLR…WTQKQSLSHD (222 aa)) constitute a Radical SAM core domain. Position 29 (Arg29) interacts with GTP. [4Fe-4S] cluster is bound by residues Cys36 and Cys40. Position 42 (Tyr42) interacts with S-adenosyl-L-methionine. Residue Cys43 participates in [4Fe-4S] cluster binding. Residue Arg78 coordinates GTP. Gly82 serves as a coordination point for S-adenosyl-L-methionine. Thr109 provides a ligand contact to GTP. Ser133 serves as a coordination point for S-adenosyl-L-methionine. Lys170 serves as a coordination point for GTP. Met204 serves as a coordination point for S-adenosyl-L-methionine. Positions 267 and 270 each coordinate [4Fe-4S] cluster. Residue 272 to 274 (RLR) coordinates GTP. A [4Fe-4S] cluster-binding site is contributed by Cys284.

The protein belongs to the radical SAM superfamily. MoaA family. In terms of assembly, monomer and homodimer. [4Fe-4S] cluster serves as cofactor.

The enzyme catalyses GTP + AH2 + S-adenosyl-L-methionine = (8S)-3',8-cyclo-7,8-dihydroguanosine 5'-triphosphate + 5'-deoxyadenosine + L-methionine + A + H(+). It functions in the pathway cofactor biosynthesis; molybdopterin biosynthesis. Its function is as follows. Catalyzes the cyclization of GTP to (8S)-3',8-cyclo-7,8-dihydroguanosine 5'-triphosphate. The chain is GTP 3',8-cyclase from Psychromonas ingrahamii (strain DSM 17664 / CCUG 51855 / 37).